We begin with the raw amino-acid sequence, 99 residues long: Aspartyl/glutamyl-tRNA(Asn/Gln) amidotransferase subunit C (99 aa).

It belongs to the GatC family. In terms of assembly, heterotrimer of A, B and C subunits.

The catalysed reaction is L-glutamyl-tRNA(Gln) + L-glutamine + ATP + H2O = L-glutaminyl-tRNA(Gln) + L-glutamate + ADP + phosphate + H(+). The enzyme catalyses L-aspartyl-tRNA(Asn) + L-glutamine + ATP + H2O = L-asparaginyl-tRNA(Asn) + L-glutamate + ADP + phosphate + 2 H(+). In terms of biological role, allows the formation of correctly charged Asn-tRNA(Asn) or Gln-tRNA(Gln) through the transamidation of misacylated Asp-tRNA(Asn) or Glu-tRNA(Gln) in organisms which lack either or both of asparaginyl-tRNA or glutaminyl-tRNA synthetases. The reaction takes place in the presence of glutamine and ATP through an activated phospho-Asp-tRNA(Asn) or phospho-Glu-tRNA(Gln). The chain is Aspartyl/glutamyl-tRNA(Asn/Gln) amidotransferase subunit C from Burkholderia vietnamiensis (strain G4 / LMG 22486) (Burkholderia cepacia (strain R1808)).